Here is a 218-residue protein sequence, read N- to C-terminus: Probable transaldolase 2 (218 aa).

The Schiff-base intermediate with substrate role is filled by lysine 83.

This sequence belongs to the transaldolase family. Type 3B subfamily.

It localises to the cytoplasm. The catalysed reaction is D-sedoheptulose 7-phosphate + D-glyceraldehyde 3-phosphate = D-erythrose 4-phosphate + beta-D-fructose 6-phosphate. It participates in carbohydrate degradation; pentose phosphate pathway; D-glyceraldehyde 3-phosphate and beta-D-fructose 6-phosphate from D-ribose 5-phosphate and D-xylulose 5-phosphate (non-oxidative stage): step 2/3. Its function is as follows. Transaldolase is important for the balance of metabolites in the pentose-phosphate pathway. This chain is Probable transaldolase 2, found in Listeria innocua serovar 6a (strain ATCC BAA-680 / CLIP 11262).